Consider the following 205-residue polypeptide: ATP-dependent Clp protease proteolytic subunit (205 aa).

Serine 98 (nucleophile) is an active-site residue. Residue histidine 123 is part of the active site.

The protein belongs to the peptidase S14 family. As to quaternary structure, fourteen ClpP subunits assemble into 2 heptameric rings which stack back to back to give a disk-like structure with a central cavity, resembling the structure of eukaryotic proteasomes.

Its subcellular location is the cytoplasm. It carries out the reaction Hydrolysis of proteins to small peptides in the presence of ATP and magnesium. alpha-casein is the usual test substrate. In the absence of ATP, only oligopeptides shorter than five residues are hydrolyzed (such as succinyl-Leu-Tyr-|-NHMec, and Leu-Tyr-Leu-|-Tyr-Trp, in which cleavage of the -Tyr-|-Leu- and -Tyr-|-Trp bonds also occurs).. Its function is as follows. Cleaves peptides in various proteins in a process that requires ATP hydrolysis. Has a chymotrypsin-like activity. Plays a major role in the degradation of misfolded proteins. This Desulforapulum autotrophicum (strain ATCC 43914 / DSM 3382 / VKM B-1955 / HRM2) (Desulfobacterium autotrophicum) protein is ATP-dependent Clp protease proteolytic subunit.